Here is a 264-residue protein sequence, read N- to C-terminus: Acyl-[acyl-carrier-protein]--UDP-N-acetylglucosamine O-acyltransferase (264 aa).

This sequence belongs to the transferase hexapeptide repeat family. LpxA subfamily. In terms of assembly, homotrimer.

The protein localises to the cytoplasm. The catalysed reaction is a (3R)-hydroxyacyl-[ACP] + UDP-N-acetyl-alpha-D-glucosamine = a UDP-3-O-[(3R)-3-hydroxyacyl]-N-acetyl-alpha-D-glucosamine + holo-[ACP]. It participates in glycolipid biosynthesis; lipid IV(A) biosynthesis; lipid IV(A) from (3R)-3-hydroxytetradecanoyl-[acyl-carrier-protein] and UDP-N-acetyl-alpha-D-glucosamine: step 1/6. Its function is as follows. Involved in the biosynthesis of lipid A, a phosphorylated glycolipid that anchors the lipopolysaccharide to the outer membrane of the cell. In Haemophilus ducreyi (strain 35000HP / ATCC 700724), this protein is Acyl-[acyl-carrier-protein]--UDP-N-acetylglucosamine O-acyltransferase.